Reading from the N-terminus, the 395-residue chain is Protein NDRG1 (395 aa).

The segment at 325–395 (RSRTGSAASS…NTPKSMEISC (71 aa)) is disordered. Positions 326-339 (SRTGSAASSSSQDG) are enriched in low complexity. 4 repeat units span residues 339-348 (GNRSRSHTNE), 349-358 (GSRSRSHTGD), 359-368 (GNRSRAHTGD), and 369-378 (GNRSRSHTDS). The segment at 339 to 378 (GNRSRSHTNEGSRSRSHTGDGNRSRAHTGDGNRSRSHTDS) is 4 X 10 AA tandem repeats of G-[NS]-R-S-R-[AS]-H-T-[DGN]-[DES]. Positions 345-376 (HTNEGSRSRSHTGDGNRSRAHTGDGNRSRSHT) are enriched in basic and acidic residues. The segment covering 377–389 (DSNNTNSEHNTPK) has biased composition (polar residues).

This sequence belongs to the NDRG family.

Its function is as follows. May be involved in pronephros development, after specification of the pronephros. The polypeptide is Protein NDRG1 (Xenopus tropicalis (Western clawed frog)).